Consider the following 228-residue polypeptide: Thiamine-phosphate synthase (228 aa).

Residues 57–61 (QLRDK) and Asn89 contribute to the 4-amino-2-methyl-5-(diphosphooxymethyl)pyrimidine site. Mg(2+) contacts are provided by Asp90 and Asp109. Ser128 provides a ligand contact to 4-amino-2-methyl-5-(diphosphooxymethyl)pyrimidine. 154–156 (TPS) contributes to the 2-[(2R,5Z)-2-carboxy-4-methylthiazol-5(2H)-ylidene]ethyl phosphate binding site. Residue Lys157 participates in 4-amino-2-methyl-5-(diphosphooxymethyl)pyrimidine binding. Residues Gly185 and 205 to 206 (IS) contribute to the 2-[(2R,5Z)-2-carboxy-4-methylthiazol-5(2H)-ylidene]ethyl phosphate site.

It belongs to the thiamine-phosphate synthase family. Requires Mg(2+) as cofactor.

The enzyme catalyses 2-[(2R,5Z)-2-carboxy-4-methylthiazol-5(2H)-ylidene]ethyl phosphate + 4-amino-2-methyl-5-(diphosphooxymethyl)pyrimidine + 2 H(+) = thiamine phosphate + CO2 + diphosphate. It carries out the reaction 2-(2-carboxy-4-methylthiazol-5-yl)ethyl phosphate + 4-amino-2-methyl-5-(diphosphooxymethyl)pyrimidine + 2 H(+) = thiamine phosphate + CO2 + diphosphate. The catalysed reaction is 4-methyl-5-(2-phosphooxyethyl)-thiazole + 4-amino-2-methyl-5-(diphosphooxymethyl)pyrimidine + H(+) = thiamine phosphate + diphosphate. It functions in the pathway cofactor biosynthesis; thiamine diphosphate biosynthesis; thiamine phosphate from 4-amino-2-methyl-5-diphosphomethylpyrimidine and 4-methyl-5-(2-phosphoethyl)-thiazole: step 1/1. Functionally, condenses 4-methyl-5-(beta-hydroxyethyl)thiazole monophosphate (THZ-P) and 2-methyl-4-amino-5-hydroxymethyl pyrimidine pyrophosphate (HMP-PP) to form thiamine monophosphate (TMP). The polypeptide is Thiamine-phosphate synthase (Roseiflexus castenholzii (strain DSM 13941 / HLO8)).